The chain runs to 466 residues: 3-isopropylmalate dehydratase large subunit (466 aa).

[4Fe-4S] cluster contacts are provided by Cys347, Cys407, and Cys410.

This sequence belongs to the aconitase/IPM isomerase family. LeuC type 1 subfamily. In terms of assembly, heterodimer of LeuC and LeuD. Requires [4Fe-4S] cluster as cofactor.

The catalysed reaction is (2R,3S)-3-isopropylmalate = (2S)-2-isopropylmalate. It functions in the pathway amino-acid biosynthesis; L-leucine biosynthesis; L-leucine from 3-methyl-2-oxobutanoate: step 2/4. Functionally, catalyzes the isomerization between 2-isopropylmalate and 3-isopropylmalate, via the formation of 2-isopropylmaleate. The chain is 3-isopropylmalate dehydratase large subunit from Buchnera aphidicola subsp. Thelaxes suberi.